A 322-amino-acid polypeptide reads, in one-letter code: Lipoyl synthase (322 aa).

Residues C69, C74, C80, C95, C99, C102, and S309 each coordinate [4Fe-4S] cluster. One can recognise a Radical SAM core domain in the interval 81-298 (FNHGTATFMI…KEIALELGFT (218 aa)).

The protein belongs to the radical SAM superfamily. Lipoyl synthase family. Requires [4Fe-4S] cluster as cofactor.

It localises to the cytoplasm. The enzyme catalyses [[Fe-S] cluster scaffold protein carrying a second [4Fe-4S](2+) cluster] + N(6)-octanoyl-L-lysyl-[protein] + 2 oxidized [2Fe-2S]-[ferredoxin] + 2 S-adenosyl-L-methionine + 4 H(+) = [[Fe-S] cluster scaffold protein] + N(6)-[(R)-dihydrolipoyl]-L-lysyl-[protein] + 4 Fe(3+) + 2 hydrogen sulfide + 2 5'-deoxyadenosine + 2 L-methionine + 2 reduced [2Fe-2S]-[ferredoxin]. It functions in the pathway protein modification; protein lipoylation via endogenous pathway; protein N(6)-(lipoyl)lysine from octanoyl-[acyl-carrier-protein]: step 2/2. In terms of biological role, catalyzes the radical-mediated insertion of two sulfur atoms into the C-6 and C-8 positions of the octanoyl moiety bound to the lipoyl domains of lipoate-dependent enzymes, thereby converting the octanoylated domains into lipoylated derivatives. In Photobacterium profundum (strain SS9), this protein is Lipoyl synthase.